We begin with the raw amino-acid sequence, 349 residues long: Probable sugar phosphate/phosphate translocator At5g25400 (349 aa).

Transmembrane regions (helical) follow at residues 15-35 (IIIS…VIVY), 49-69 (FPIS…FLLI), 89-109 (VVPI…AYIY), 113-133 (SFIQ…GVLF), 141-161 (ETMM…YGEA), 165-185 (VWGV…LVMI), 205-225 (VAPC…FPIL), 236-256 (LIFG…FLLV), 263-283 (TMNV…WSVI), and 286-306 (TVTP…AYYN). The 119-residue stretch at 38–156 (YILDKKMYDW…LSISFGVAIA (119 aa)) folds into the EamA domain. The segment at 321–349 (TAQQVDEETGRLLEEREGNEGGRKNEPED) is disordered. Residues 328 to 349 (ETGRLLEEREGNEGGRKNEPED) show a composition bias toward basic and acidic residues.

Belongs to the TPT transporter family. TPT (TC 2.A.7.9) subfamily.

Its subcellular location is the membrane. The sequence is that of Probable sugar phosphate/phosphate translocator At5g25400 from Arabidopsis thaliana (Mouse-ear cress).